The chain runs to 398 residues: Probable aminomethyltransferase (398 aa).

The protein belongs to the GcvT family. The glycine cleavage system is composed of four proteins: P, T, L and H.

The enzyme catalyses N(6)-[(R)-S(8)-aminomethyldihydrolipoyl]-L-lysyl-[protein] + (6S)-5,6,7,8-tetrahydrofolate = N(6)-[(R)-dihydrolipoyl]-L-lysyl-[protein] + (6R)-5,10-methylene-5,6,7,8-tetrahydrofolate + NH4(+). Functionally, the glycine cleavage system catalyzes the degradation of glycine. The polypeptide is Probable aminomethyltransferase (Pyrococcus horikoshii (strain ATCC 700860 / DSM 12428 / JCM 9974 / NBRC 100139 / OT-3)).